Consider the following 143-residue polypeptide: UPF0225 protein Reut_A0143 (143 aa).

It belongs to the UPF0225 family.

This is UPF0225 protein Reut_A0143 from Cupriavidus pinatubonensis (strain JMP 134 / LMG 1197) (Cupriavidus necator (strain JMP 134)).